The primary structure comprises 129 residues: uncharacterized protein (129 aa).

Residues 85–108 (SSAADSDDSSSCSECDSDALLSDD) show a composition bias toward low complexity. The disordered stretch occupies residues 85 to 110 (SSAADSDDSSSCSECDSDALLSDDGP).

This is an uncharacterized protein from Microplitis demolitor (Parasitoid wasp).